Consider the following 554-residue polypeptide: Phospho-2-dehydro-3-deoxyheptonate aldolase 1, chloroplastic (554 aa).

The transit peptide at Met1–Arg39 directs the protein to the chloroplast. Residues Val41–Lys70 are disordered.

This sequence belongs to the class-II DAHP synthase family.

It localises to the plastid. The protein localises to the chloroplast. It catalyses the reaction D-erythrose 4-phosphate + phosphoenolpyruvate + H2O = 7-phospho-2-dehydro-3-deoxy-D-arabino-heptonate + phosphate. Its pathway is metabolic intermediate biosynthesis; chorismate biosynthesis; chorismate from D-erythrose 4-phosphate and phosphoenolpyruvate: step 1/7. The polypeptide is Phospho-2-dehydro-3-deoxyheptonate aldolase 1, chloroplastic (DAHPS1) (Oryza sativa subsp. japonica (Rice)).